The chain runs to 299 residues: Small ribosomal subunit protein uS2 (299 aa).

Positions 227-299 (SERKSEKSTK…DKAKASNEEE (73 aa)) are disordered.

The protein belongs to the universal ribosomal protein uS2 family.

The chain is Small ribosomal subunit protein uS2 from Christiangramia forsetii (strain DSM 17595 / CGMCC 1.15422 / KT0803) (Gramella forsetii).